Consider the following 759-residue polypeptide: Zinc finger protein 287 (759 aa).

Residues 42–124 (RRNFRNFPYP…ALVEDLTQIL (83 aa)) enclose the SCAN box domain. The disordered stretch occupies residues 127–154 (EEAPQSSALPQDTPEDDPNHDPNPASQA). One can recognise a KRAB domain in the interval 166-234 (VTFNDVAVDI…IKEIVEGPNP (69 aa)). 14 consecutive C2H2-type zinc fingers follow at residues 366–388 (YSCN…RENH), 394–416 (YECE…QRMH), 422–444 (YECH…QRIH), 450–472 (YKCE…QRTH), 478–500 (YKCL…QRVH), 506–528 (YICN…QKIH), 534–556 (YKCN…QRIH), 562–584 (YKCT…QTTH), 590–612 (YICN…HRTH), 618–640 (YKCS…QRIH), 646–668 (FKCN…QRVH), 674–696 (YKCH…RRTH), 702–724 (YKCS…QRIH), and 730–752 (YGCR…QRVH).

This sequence belongs to the krueppel C2H2-type zinc-finger protein family. In terms of tissue distribution, expressed in brain and at low levels in kidney and spleen and few hematopoietic cell lines.

It is found in the nucleus. Functionally, may be involved in transcriptional regulation. The sequence is that of Zinc finger protein 287 from Mus musculus (Mouse).